Consider the following 329-residue polypeptide: o-succinylbenzoate synthase (329 aa).

K140 serves as the catalytic Proton donor. 3 residues coordinate Mg(2+): D168, E197, and D220. Residue K242 is the Proton acceptor of the active site.

The protein belongs to the mandelate racemase/muconate lactonizing enzyme family. MenC type 1 subfamily. A divalent metal cation serves as cofactor.

It carries out the reaction (1R,6R)-6-hydroxy-2-succinyl-cyclohexa-2,4-diene-1-carboxylate = 2-succinylbenzoate + H2O. It participates in quinol/quinone metabolism; 1,4-dihydroxy-2-naphthoate biosynthesis; 1,4-dihydroxy-2-naphthoate from chorismate: step 4/7. The protein operates within quinol/quinone metabolism; menaquinone biosynthesis. In terms of biological role, converts 2-succinyl-6-hydroxy-2,4-cyclohexadiene-1-carboxylate (SHCHC) to 2-succinylbenzoate (OSB). The chain is o-succinylbenzoate synthase from Haemophilus influenzae (strain ATCC 51907 / DSM 11121 / KW20 / Rd).